Reading from the N-terminus, the 278-residue chain is 4-diphosphocytidyl-2-C-methyl-D-erythritol kinase (278 aa).

The active site involves lysine 9. 93–103 provides a ligand contact to ATP; that stretch reads PISAGLAGGSS. The active site involves aspartate 135.

Belongs to the GHMP kinase family. IspE subfamily.

It catalyses the reaction 4-CDP-2-C-methyl-D-erythritol + ATP = 4-CDP-2-C-methyl-D-erythritol 2-phosphate + ADP + H(+). It functions in the pathway isoprenoid biosynthesis; isopentenyl diphosphate biosynthesis via DXP pathway; isopentenyl diphosphate from 1-deoxy-D-xylulose 5-phosphate: step 3/6. Catalyzes the phosphorylation of the position 2 hydroxy group of 4-diphosphocytidyl-2C-methyl-D-erythritol. This chain is 4-diphosphocytidyl-2-C-methyl-D-erythritol kinase, found in Finegoldia magna (strain ATCC 29328 / DSM 20472 / WAL 2508) (Peptostreptococcus magnus).